A 221-amino-acid polypeptide reads, in one-letter code: Small ribosomal subunit protein uS3 (221 aa).

One can recognise a KH type-2 domain in the interval 39–108 (IRKFVKKRSY…NVIINIVEVK (70 aa)).

This sequence belongs to the universal ribosomal protein uS3 family. As to quaternary structure, part of the 30S ribosomal subunit. Forms a tight complex with proteins S10 and S14.

Functionally, binds the lower part of the 30S subunit head. Binds mRNA in the 70S ribosome, positioning it for translation. This is Small ribosomal subunit protein uS3 from Clostridium novyi (strain NT).